The following is a 197-amino-acid chain: ATP-dependent Clp protease proteolytic subunit 2 (197 aa).

The active-site Nucleophile is Ser-96. His-121 is a catalytic residue.

It belongs to the peptidase S14 family. Fourteen ClpP subunits assemble into 2 heptameric rings which stack back to back to give a disk-like structure with a central cavity, resembling the structure of eukaryotic proteasomes.

The protein localises to the cytoplasm. The enzyme catalyses Hydrolysis of proteins to small peptides in the presence of ATP and magnesium. alpha-casein is the usual test substrate. In the absence of ATP, only oligopeptides shorter than five residues are hydrolyzed (such as succinyl-Leu-Tyr-|-NHMec, and Leu-Tyr-Leu-|-Tyr-Trp, in which cleavage of the -Tyr-|-Leu- and -Tyr-|-Trp bonds also occurs).. Functionally, cleaves peptides in various proteins in a process that requires ATP hydrolysis. Has a chymotrypsin-like activity. Plays a major role in the degradation of misfolded proteins. The chain is ATP-dependent Clp protease proteolytic subunit 2 from Synechococcus sp. (strain CC9605).